We begin with the raw amino-acid sequence, 175 residues long: CDP-archaeol synthase (175 aa).

Helical transmembrane passes span 41–61, 82–102, 122–142, and 147–167; these read GFFV…QLLE, TILI…MSFF, FVLG…AEQF, and IAVI…VGYF.

This sequence belongs to the CDP-archaeol synthase family. Requires Mg(2+) as cofactor.

The protein resides in the cell membrane. It catalyses the reaction 2,3-bis-O-(geranylgeranyl)-sn-glycerol 1-phosphate + CTP + H(+) = CDP-2,3-bis-O-(geranylgeranyl)-sn-glycerol + diphosphate. The protein operates within membrane lipid metabolism; glycerophospholipid metabolism. Functionally, catalyzes the formation of CDP-2,3-bis-(O-geranylgeranyl)-sn-glycerol (CDP-archaeol) from 2,3-bis-(O-geranylgeranyl)-sn-glycerol 1-phosphate (DGGGP) and CTP. This reaction is the third ether-bond-formation step in the biosynthesis of archaeal membrane lipids. The polypeptide is CDP-archaeol synthase (Methanococcoides burtonii (strain DSM 6242 / NBRC 107633 / OCM 468 / ACE-M)).